Reading from the N-terminus, the 463-residue chain is MSGIGPDQALSIAAIATAVAPGQGGIAVIRLSGPSAVRAVAAITVIPGQQVWESHRVLYGHVVAAGGVERLDEVLVLVMLAPRSFTGEDVVEIHCHGGVIAVQQVLARVLEQPGVRRALPGEFSQRAVLNGRLDLTRAEAIGDLVGARSQRAAQLAMAGLDGGIQKKMVVLRERLLDQLSELEARVDFEEDLPPLNGEALLQELQAVRLELLTLVADGERGSVVRHGLRVALVGRPNVGKSSLLNLLSRRERAIVTDLPGTTRDLLESEIVLDGVPITLLDTAGIRATSNAVEKLGIARSRDALASADLVLLLFDLAQGWSDDDQALFALIPEGVPCLRVGNKADLPLKAEPVAETVAASVADVRLSAVTGDGEQALVQAVLERCGALGEQPLLLALNQRQSDLAVTAAEALARSEQVAADGLPWDFWTIDLRQAIRSLGEITGEQLTESVLDRIFSRFCIGK.

Residues Arg-30, Glu-92, and Arg-132 each contribute to the (6S)-5-formyl-5,6,7,8-tetrahydrofolate site. Residues 227-386 form the TrmE-type G domain; it reads GLRVALVGRP…LVQAVLERCG (160 aa). Asn-237 contacts K(+). GTP-binding positions include 237–242, 256–262, 281–284, and 342–345; these read NVGKSS, TDLPGTT, DTAG, and NKAD. Ser-241 is a Mg(2+) binding site. Positions 256, 258, and 261 each coordinate K(+). Position 262 (Thr-262) interacts with Mg(2+). A (6S)-5-formyl-5,6,7,8-tetrahydrofolate-binding site is contributed by Lys-463.

This sequence belongs to the TRAFAC class TrmE-Era-EngA-EngB-Septin-like GTPase superfamily. TrmE GTPase family. As to quaternary structure, homodimer. Heterotetramer of two MnmE and two MnmG subunits. It depends on K(+) as a cofactor.

Its subcellular location is the cytoplasm. Its function is as follows. Exhibits a very high intrinsic GTPase hydrolysis rate. Involved in the addition of a carboxymethylaminomethyl (cmnm) group at the wobble position (U34) of certain tRNAs, forming tRNA-cmnm(5)s(2)U34. This is tRNA modification GTPase MnmE from Synechococcus sp. (strain CC9311).